The primary structure comprises 187 residues: UPF0301 protein YqgE (187 aa).

Belongs to the UPF0301 (AlgH) family.

This chain is UPF0301 protein YqgE, found in Escherichia fergusonii (strain ATCC 35469 / DSM 13698 / CCUG 18766 / IAM 14443 / JCM 21226 / LMG 7866 / NBRC 102419 / NCTC 12128 / CDC 0568-73).